The primary structure comprises 329 residues: Dapdiamide synthesis protein DdaC (329 aa).

Fe(2+) serves as cofactor.

The protein operates within antibiotic biosynthesis. Its function is as follows. Involved in dapdiamide antibiotics biosynthesis. Catalyzes the alpha-ketoglutarate-dependent epoxidation of the covalently bound N-beta-fumaramoyl-DAP-S-DdaD to generate N-beta-epoxysuccinamoyl-DAP in thioester linkage to DdaD. This is Dapdiamide synthesis protein DdaC from Enterobacter agglomerans (Erwinia herbicola).